Here is a 105-residue protein sequence, read N- to C-terminus: Unclassified hydrophobin D (105 aa).

The first 18 residues, 1–18, serve as a signal peptide directing secretion; that stretch reads MKFYIVLLALAAFAMAEA. Intrachain disulfides connect C35–C86, C42–C83, and C43–C49.

The protein localises to the secreted. Its subcellular location is the cell wall. Functionally, aerial growth, conidiation, and dispersal of filamentous fungi in the environment rely upon a capability of their secreting small amphipathic proteins called hydrophobins (HPBs) with low sequence identity. Class I can self-assemble into an outermost layer of rodlet bundles on aerial cell surfaces, conferring cellular hydrophobicity that supports fungal growth, development and dispersal; whereas Class II form highly ordered films at water-air interfaces through intermolecular interactions but contribute nothing to the rodlet structure. In P.expansum, hydrophobins contribute to germination, tolerance to cold stress and mycotoxins patulin and citrinin production. The protein is Unclassified hydrophobin D of Penicillium expansum (Blue mold rot fungus).